The following is a 121-amino-acid chain: MDYRFGRQYRLLKTDDFSSVFAFRNRRSRDLLQVSRSNGNGLDHPRIGLVVGKKTAKRANERNYMKRVIRDWFRLNKNRLPPQDFVVRVRRKFDRATAKQARAELAQLMFGNPATGCGKQV.

It belongs to the RnpA family. In terms of assembly, consists of a catalytic RNA component (M1 or rnpB) and a protein subunit.

It carries out the reaction Endonucleolytic cleavage of RNA, removing 5'-extranucleotides from tRNA precursor.. Its function is as follows. RNaseP catalyzes the removal of the 5'-leader sequence from pre-tRNA to produce the mature 5'-terminus. It can also cleave other RNA substrates such as 4.5S RNA. The protein component plays an auxiliary but essential role in vivo by binding to the 5'-leader sequence and broadening the substrate specificity of the ribozyme. The polypeptide is Ribonuclease P protein component (Neisseria gonorrhoeae (strain ATCC 700825 / FA 1090)).